We begin with the raw amino-acid sequence, 179 residues long: Large ribosomal subunit protein uL5 (179 aa).

The protein belongs to the universal ribosomal protein uL5 family. As to quaternary structure, part of the 50S ribosomal subunit; part of the 5S rRNA/L5/L18/L25 subcomplex. Contacts the 5S rRNA and the P site tRNA. Forms a bridge to the 30S subunit in the 70S ribosome.

In terms of biological role, this is one of the proteins that bind and probably mediate the attachment of the 5S RNA into the large ribosomal subunit, where it forms part of the central protuberance. In the 70S ribosome it contacts protein S13 of the 30S subunit (bridge B1b), connecting the 2 subunits; this bridge is implicated in subunit movement. Contacts the P site tRNA; the 5S rRNA and some of its associated proteins might help stabilize positioning of ribosome-bound tRNAs. This Exiguobacterium sp. (strain ATCC BAA-1283 / AT1b) protein is Large ribosomal subunit protein uL5.